We begin with the raw amino-acid sequence, 759 residues long: Phosphoribosylformylglycinamidine synthase subunit PurL (759 aa).

Residue His-61 is part of the active site. Residues Tyr-64 and Lys-105 each contribute to the ATP site. Glu-107 is a binding site for Mg(2+). Residues 108-111 and Arg-130 contribute to the substrate site; that span reads SHNH. The active-site Proton acceptor is the His-109. Asp-131 provides a ligand contact to Mg(2+). Residue Gln-260 coordinates substrate. Asp-288 is a binding site for Mg(2+). 332 to 334 contacts substrate; that stretch reads ESQ. ATP is bound by residues Asp-520 and Gly-557. Asn-558 serves as a coordination point for Mg(2+). Residue Ser-560 coordinates substrate.

This sequence belongs to the FGAMS family. As to quaternary structure, monomer. Part of the FGAM synthase complex composed of 1 PurL, 1 PurQ and 2 PurS subunits.

Its subcellular location is the cytoplasm. The catalysed reaction is N(2)-formyl-N(1)-(5-phospho-beta-D-ribosyl)glycinamide + L-glutamine + ATP + H2O = 2-formamido-N(1)-(5-O-phospho-beta-D-ribosyl)acetamidine + L-glutamate + ADP + phosphate + H(+). It functions in the pathway purine metabolism; IMP biosynthesis via de novo pathway; 5-amino-1-(5-phospho-D-ribosyl)imidazole from N(2)-formyl-N(1)-(5-phospho-D-ribosyl)glycinamide: step 1/2. Its function is as follows. Part of the phosphoribosylformylglycinamidine synthase complex involved in the purines biosynthetic pathway. Catalyzes the ATP-dependent conversion of formylglycinamide ribonucleotide (FGAR) and glutamine to yield formylglycinamidine ribonucleotide (FGAM) and glutamate. The FGAM synthase complex is composed of three subunits. PurQ produces an ammonia molecule by converting glutamine to glutamate. PurL transfers the ammonia molecule to FGAR to form FGAM in an ATP-dependent manner. PurS interacts with PurQ and PurL and is thought to assist in the transfer of the ammonia molecule from PurQ to PurL. This chain is Phosphoribosylformylglycinamidine synthase subunit PurL, found in Thermoplasma acidophilum (strain ATCC 25905 / DSM 1728 / JCM 9062 / NBRC 15155 / AMRC-C165).